We begin with the raw amino-acid sequence, 101 residues long: Large ribosomal subunit protein bL28 (101 aa).

This sequence belongs to the bacterial ribosomal protein bL28 family.

The sequence is that of Large ribosomal subunit protein bL28 from Methylorubrum extorquens (strain CM4 / NCIMB 13688) (Methylobacterium extorquens).